The chain runs to 471 residues: MTDLPNNVRWQLWIVAFGFFMQSLDTTIVNTALPSMAKSLGESPLHMHMVIVSYVLTVAVMLPASGWMADKIGVRNIFFTAIVLFTLGSLFCAKADTLNELVMSRVLQGVGGAMMVPVGRLTVMKIVPREQYMAAMTFVTLPGQVGPLLGPALGGILVEYASWHWIFLINLPVGIVGAIATLWLMPNYKMQTRRFDIFGFVLLAAGMATLTLALDGQKGLGISTLTLCLLIVIGIVSILWYLWHARDNDRALFSLALFRNTTYRIGLFGSFVGRLGSGMLPFMTPVFLQIGLGFSPFHAGLMMIPMVLGSMGMKRIVVQVVNYFGYRRVLVVCTLGLALISLVFMAVALMGWYYVLPLVLFFQGMINSTRFSSMNTLTLKDLPDELASSGNSLLSMIMQLSMSVGVTVAGLLLGMYGQQHLGADTAGAHHVFLYTYLSMAVIIALPALIFARVPNDTSKNVVIGRRKRSER.

Transmembrane regions (helical) follow at residues 12–32, 49–69, 72–92, 101–123, 138–158, 165–185, 195–215, 220–240, 265–285, 286–306, 342–362, 393–413, and 431–451; these read LWIVAFGFFMQSLDTTIVNTA, MVIVSYVLTVAVMLPASGWMA, IGVRNIFFTAIVLFTLGSLFC, LVMSRVLQGVGGAMMVPVGRLTV, FVTLPGQVGPLLGPALGGILV, WIFLINLPVGIVGAIATLWLM, FDIFGFVLLAAGMATLTLALD, LGISTLTLCLLIVIGIVSILW, IGLFGSFVGRLGSGMLPFMTP, VFLQIGLGFSPFHAGLMMIPM, LVFMAVALMGWYYVLPLVLFF, LLSMIMQLSMSVGVTVAGLLL, and VFLYTYLSMAVIIALPALIFA.

This sequence belongs to the major facilitator superfamily. TCR/Tet family.

It is found in the cell inner membrane. The polypeptide is Putative multidrug resistance protein MdtD (Enterobacter sp. (strain 638)).